The sequence spans 63 residues: Large ribosomal subunit protein uL30 (63 aa).

It belongs to the universal ribosomal protein uL30 family. In terms of assembly, part of the 50S ribosomal subunit.

This is Large ribosomal subunit protein uL30 from Stenotrophomonas maltophilia (strain K279a).